A 643-amino-acid polypeptide reads, in one-letter code: Complement component C1q receptor (643 aa).

The first 23 residues, 1–23 (MVTSTGLLLLLGLLGQLWAGAAA), serve as a signal peptide directing secretion. Over 24–571 (DSEAVVCEGT…HSDSDTDGQK (548 aa)) the chain is Extracellular. The C-type lectin domain occupies 31-173 (EGTACYTAHW…CGTPDAPGNS (143 aa)). 16 disulfides stabilise this stretch: Cys-140-Cys-164, Cys-261-Cys-272, Cys-268-Cys-282, Cys-284-Cys-297, Cys-303-Cys-314, Cys-308-Cys-325, Cys-327-Cys-340, Cys-346-Cys-355, Cys-351-Cys-364, Cys-366-Cys-380, Cys-386-Cys-397, Cys-393-Cys-406, Cys-408-Cys-422, Cys-428-Cys-437, Cys-433-Cys-446, and Cys-448-Cys-461. EGF-like domains follow at residues 257 to 298 (PKFG…VTCA) and 299 to 341 (SRNP…VHCV). Asn-322 carries N-linked (GlcNAc...) asparagine glycosylation. The EGF-like 3; calcium-binding domain maps to 342 to 381 (DIDECEDSPCDQECINTPGGFHCECWVGYQSSGSKEEACE). Residues 382 to 423 (DVDECTAAYSPCAQGCTNTDGSFYCSCKEGYIMSGEDSTQCE) form the EGF-like 4; calcium-binding domain. In terms of domain architecture, EGF-like 5; calcium-binding spans 424–462 (DIDECLGNPCDTLCINTDGSFRCGCPAGFELAPNGVSCT). Residues 469–517 (ELPARPPQKEDKGDGKESTVPLTEMPGSLNGSKDVSNRAQTTDLSIQSD) form a disordered region. Over residues 475–485 (PQKEDKGDGKE) the composition is skewed to basic and acidic residues. A compositionally biased stretch (polar residues) spans 497-517 (LNGSKDVSNRAQTTDLSIQSD). N-linked (GlcNAc...) asparagine glycosylation occurs at Asn-498. A helical membrane pass occupies residues 572–592 (LLLFYILGTVVAISLLLALAL). Over 593–643 (GLLIYLKRKAKKEEIKEKKAQNAADSYSWIPERAESRAPENQYSPTPGTDC) the chain is Cytoplasmic. Residues 606–643 (EIKEKKAQNAADSYSWIPERAESRAPENQYSPTPGTDC) are disordered. Ser-618 is modified (phosphoserine). A phosphotyrosine mark is found at Tyr-619 and Tyr-635. The segment covering 631 to 643 (PENQYSPTPGTDC) has biased composition (polar residues).

As to quaternary structure, homodimer. Interacts with C1QBP; the association may represent a cell surface C1q receptor. Interacts with surfactant protein A/SFTPA1. Interacts with multimerin-2/MMRN2. Interacts with DAG1; this interaction plays an important role in endothelial cell migration. Interacts with CBL. Interacts with IGFBP7. Interacts with VEGFR2. Post-translationally, N- and O-glycosylated. In terms of processing, phosphorylated on Tyr-619 and Tyr-635 by SRC; these phosphorylations promote endothelial cell adhesion and migration. As to expression, widely expressed. Highly expressed in lung and heart. Expressed at lower level in brain, thymus, liver, spleen, intestine, kidney, adrenal gland, muscle and testis. Expressed on endothelial cells, platelets, undifferentiated monocytes and circulating natural killer cells.

The protein resides in the cell membrane. In terms of biological role, cell surface receptor that plays a role in various physiological processes including inflammation, phagocytosis, and cell adhesion. Plays a role in phagocytosis and enhances the uptake of apoptotic cells and immune complexes by acting as a receptor for defense collagens including surfactant protein A/SFTPA1, C1q, and mannose-binding lectin (MBL2). Plays a role in the regulation of endothelial cell function and adhesion by activating angiogenesis. Mechanistically, exerts its angiogenic function by associating with beta-dystroglycan, leading to SRC-dependent phosphorylation and subsequent recruitment of CBL. In turn, CBL provides a docking site for downstream signaling components, such as CRKL to enhance cell migration. Participates in angiogenesis also by acting as a receptor for the ECM pan-endothelial glycoprotein multimerin-2/MMRN2 and IGFBP7 ligands. Both ligands play a non-redundant role in CD93-mediated endothelial cell function. Acts as a key regulator of endothelial barrier function through modulating VEGFR2 function. In Rattus norvegicus (Rat), this protein is Complement component C1q receptor (Cd93).